The following is a 388-amino-acid chain: Arginine biosynthesis bifunctional protein ArgJ 2 (388 aa).

Positions 145, 167, 178, 257, and 381 each coordinate substrate. Thr178 serves as the catalytic Nucleophile.

The protein belongs to the ArgJ family. As to quaternary structure, heterotetramer of two alpha and two beta chains.

It is found in the cytoplasm. The catalysed reaction is N(2)-acetyl-L-ornithine + L-glutamate = N-acetyl-L-glutamate + L-ornithine. It carries out the reaction L-glutamate + acetyl-CoA = N-acetyl-L-glutamate + CoA + H(+). The protein operates within amino-acid biosynthesis; L-arginine biosynthesis; L-ornithine and N-acetyl-L-glutamate from L-glutamate and N(2)-acetyl-L-ornithine (cyclic): step 1/1. It functions in the pathway amino-acid biosynthesis; L-arginine biosynthesis; N(2)-acetyl-L-ornithine from L-glutamate: step 1/4. Its function is as follows. Catalyzes two activities which are involved in the cyclic version of arginine biosynthesis: the synthesis of N-acetylglutamate from glutamate and acetyl-CoA as the acetyl donor, and of ornithine by transacetylation between N(2)-acetylornithine and glutamate. The protein is Arginine biosynthesis bifunctional protein ArgJ 2 of Clostridium acetobutylicum (strain ATCC 824 / DSM 792 / JCM 1419 / IAM 19013 / LMG 5710 / NBRC 13948 / NRRL B-527 / VKM B-1787 / 2291 / W).